A 264-amino-acid chain; its full sequence is uncharacterized protein (264 aa).

8 consecutive transmembrane segments (helical) span residues 19–39, 42–62, 69–89, 100–120, 136–156, 160–180, 192–212, and 223–243; these read LFPA…LPFL, YDWL…SGLE, VITL…HMGS, IFGV…YLCQ, FAVV…HFSI, WWLS…YEVN, FILI…FGAW, and LVHL…FLIV.

The protein resides in the cell membrane. This is an uncharacterized protein from Bacillus subtilis (strain 168).